Here is a 283-residue protein sequence, read N- to C-terminus: Formamidopyrimidine-DNA glycosylase (283 aa).

P2 (schiff-base intermediate with DNA) is an active-site residue. E3 serves as the catalytic Proton donor. The active-site Proton donor; for beta-elimination activity is the K60. H100, R119, and R164 together coordinate DNA. The segment at 249–283 adopts an FPG-type zinc-finger fold; the sequence is WVYNRAGEPCKVCGDVIQRIKLGGRSSHFCRQCQV. R273 acts as the Proton donor; for delta-elimination activity in catalysis.

It belongs to the FPG family. As to quaternary structure, monomer. Requires Zn(2+) as cofactor.

The catalysed reaction is Hydrolysis of DNA containing ring-opened 7-methylguanine residues, releasing 2,6-diamino-4-hydroxy-5-(N-methyl)formamidopyrimidine.. The enzyme catalyses 2'-deoxyribonucleotide-(2'-deoxyribose 5'-phosphate)-2'-deoxyribonucleotide-DNA = a 3'-end 2'-deoxyribonucleotide-(2,3-dehydro-2,3-deoxyribose 5'-phosphate)-DNA + a 5'-end 5'-phospho-2'-deoxyribonucleoside-DNA + H(+). Its function is as follows. Involved in base excision repair of DNA damaged by oxidation or by mutagenic agents. Acts as a DNA glycosylase that recognizes and removes damaged bases. Has a preference for oxidized purines, such as 7,8-dihydro-8-oxoguanine (8-oxoG). Has AP (apurinic/apyrimidinic) lyase activity and introduces nicks in the DNA strand. Cleaves the DNA backbone by beta-delta elimination to generate a single-strand break at the site of the removed base with both 3'- and 5'-phosphates. In Nostoc sp. (strain PCC 7120 / SAG 25.82 / UTEX 2576), this protein is Formamidopyrimidine-DNA glycosylase.